The following is a 551-amino-acid chain: Cleavage and polyadenylation specificity factor subunit 6 (551 aa).

The necessary for interaction with NXF1 stretch occupies residues 1 to 213 (MADGVDHIDI…RGRFPGAVPG (213 aa)). In terms of domain architecture, RRM spans 81–161 (IALYIGNLTW…QNPVVTPCNK (81 aa)). The tract at residues 81 to 161 (IALYIGNLTW…QNPVVTPCNK (81 aa)) is necessary for interaction with NUDT21/CPSF5. The segment at 81–161 (IALYIGNLTW…QNPVVTPCNK (81 aa)) is necessary for nuclear paraspeckles localization. Position 157 is a phosphothreonine (T157). Over residues 169 to 180 (MQSRKTTQSGQM) the composition is skewed to polar residues. Disordered stretches follow at residues 169–411 (MQSR…PLSE) and 477–551 (LHGI…YRHR). The GAR signature appears at 202 to 206 (RGRGR). Positions 207-219 (FPGAVPGGDRFPG) are enriched in low complexity. Pro residues-rich tracts occupy residues 220 to 265 (PAGP…PLAG), 285 to 366 (GQPP…PPPT), and 377 to 388 (GPPPTDPYGRPP). The segment covering 389–404 (PYDRGDYGPPGREMDT) has biased composition (basic and acidic residues). Phosphothreonine occurs at positions 404 and 407. Residues 404–551 (TARTPLSEAE…RDREREYRHR (148 aa)) form a sufficient for nuclear speckle localization region. A necessary for RNA-binding region spans residues 405 to 551 (ARTPLSEAEF…RDREREYRHR (147 aa)). The necessary for interaction with SRSF3, SRSF7 and TRA2B/SFRS10 stretch occupies residues 481–551 (ESKSYGSGSR…RDREREYRHR (71 aa)). The segment covering 489-503 (SRRERSRERDHSRSR) has biased composition (basic and acidic residues). Residues 490–551 (RRERSRERDH…RDREREYRHR (62 aa)) are arg/Ser-rich domain. Phosphoserine is present on residues S494, S500, S511, S513, and S525. The segment covering 504–514 (EKSRRHKSRSR) has biased composition (basic residues). Residues 510-551 (KSRSRDRHDDYYRERSRERERHRDRDRDRDRERDREREYRHR) are sufficient for nuclear targeting. Basic and acidic residues predominate over residues 515–551 (DRHDDYYRERSRERERHRDRDRDRDRERDREREYRHR).

This sequence belongs to the RRM CPSF6/7 family. As to quaternary structure, component of the cleavage factor Im (CFIm) complex which is a heterotetramer composed of two subunits of NUDT21/CPSF5 and two subunits of CPSF6 or CPSF7 or a heterodimer of CPSF6 and CPSF7. The cleavage factor Im (CFIm) complex associates with the CPSF and CSTF complexes to promote the assembly of the core mRNA 3'-processing machinery. Associates with the exon junction complex (EJC). Associates with the 80S ribosome particle. Interacts (via the RRM domain) with NUDT21/CPSF5; this interaction is direct and enhances binding to RNA. Interacts (via Arg/Ser-rich domain) with FIP1L1 (preferentially via unphosphorylated form and Arg/Glu/Asp-rich domain); this interaction mediates, at least in part, the interaction between the CFIm and CPSF complexes and may be inhibited by CPSF6 hyper-phosphorylation. Interacts (via N-terminus) with NXF1; this interaction is direct. Interacts with SRSF3. Interacts with SRSF7. Interacts with SNRNP70. Interacts with TRA2B/SFRS10. Interacts with UPF1. Interacts with UPF3B. Interacts with VIRMA. Interacts (via Arg/Ser-rich domain) with TNPO3; promoting nuclear import of CPSF6 independently of its phosphorylation status. Interacts with YTHDC1. Post-translationally, phosphorylated. Phosphorylated in the Arg/Ser-rich domain by SRPK1, in vitro. Symmetrically dimethylated on arginine residues in the GAR motif by PRMT5 in a WDR77- and CLNS1A-dependent manner. Asymmetrically dimethylated on arginine residues in the GAR motif by PRMT1.

It localises to the nucleus. The protein resides in the nucleoplasm. It is found in the nucleus speckle. Its subcellular location is the cytoplasm. Functionally, component of the cleavage factor Im (CFIm) complex that functions as an activator of the pre-mRNA 3'-end cleavage and polyadenylation processing required for the maturation of pre-mRNA into functional mRNAs. CFIm contributes to the recruitment of multiprotein complexes on specific sequences on the pre-mRNA 3'-end, so called cleavage and polyadenylation signals (pA signals). Most pre-mRNAs contain multiple pA signals, resulting in alternative cleavage and polyadenylation (APA) producing mRNAs with variable 3'-end formation. The CFIm complex acts as a key regulator of cleavage and polyadenylation site choice during APA through its binding to 5'-UGUA-3' elements localized in the 3'-untranslated region (UTR) for a huge number of pre-mRNAs. CPSF6 enhances NUDT21/CPSF5 binding to 5'-UGUA-3' elements localized upstream of pA signals and promotes RNA looping, and hence activates directly the mRNA 3'-processing machinery. Plays a role in mRNA export. This is Cleavage and polyadenylation specificity factor subunit 6 from Bos taurus (Bovine).